The chain runs to 130 residues: MKNEFSIKFNFPDGILGFEEIKEFIIKDSEYKPFSIMQSINGEINFLVTSPFNFLEKYLPNIEEKDWLDVQAENEDEKVILCIINMHVKTYKEITANLKAPIILNKKKLIGKQAISTNEEHYLRYRVFKE.

The protein belongs to the FliW family. As to quaternary structure, interacts with translational regulator CsrA and flagellin(s).

It is found in the cytoplasm. Its function is as follows. Acts as an anti-CsrA protein, binds CsrA and prevents it from repressing translation of its target genes, one of which is flagellin. Binds to flagellin and participates in the assembly of the flagellum. The protein is Flagellar assembly factor FliW of Borrelia hermsii (strain HS1 / DAH).